A 239-amino-acid polypeptide reads, in one-letter code: Aspartate/glutamate leucyltransferase (239 aa).

This sequence belongs to the R-transferase family. Bpt subfamily.

The protein resides in the cytoplasm. The enzyme catalyses N-terminal L-glutamyl-[protein] + L-leucyl-tRNA(Leu) = N-terminal L-leucyl-L-glutamyl-[protein] + tRNA(Leu) + H(+). The catalysed reaction is N-terminal L-aspartyl-[protein] + L-leucyl-tRNA(Leu) = N-terminal L-leucyl-L-aspartyl-[protein] + tRNA(Leu) + H(+). Its function is as follows. Functions in the N-end rule pathway of protein degradation where it conjugates Leu from its aminoacyl-tRNA to the N-termini of proteins containing an N-terminal aspartate or glutamate. The protein is Aspartate/glutamate leucyltransferase of Campylobacter jejuni (strain RM1221).